The chain runs to 94 residues: Co-chaperonin GroES (94 aa).

It belongs to the GroES chaperonin family. In terms of assembly, heptamer of 7 subunits arranged in a ring. Interacts with the chaperonin GroEL.

Its subcellular location is the cytoplasm. Together with the chaperonin GroEL, plays an essential role in assisting protein folding. The GroEL-GroES system forms a nano-cage that allows encapsulation of the non-native substrate proteins and provides a physical environment optimized to promote and accelerate protein folding. GroES binds to the apical surface of the GroEL ring, thereby capping the opening of the GroEL channel. This chain is Co-chaperonin GroES, found in Acetivibrio thermocellus (strain ATCC 27405 / DSM 1237 / JCM 9322 / NBRC 103400 / NCIMB 10682 / NRRL B-4536 / VPI 7372) (Clostridium thermocellum).